A 260-amino-acid polypeptide reads, in one-letter code: MFSSSFSYPSKTSPLTSPFLAEHSSASGRRLEHRSLCDHEPRHQYRPPWEWNPYPTNGPIASPTCFDFPQDHQGLPSPSGVIFNPSDRFLYAPSGPHFQRGFPAEPRALLGRYSAFGSDSQLFFHDGRNRVLPPGFDQFFDYAAEGMKERITPGIRPGQVDPAEWLRSPDGESSEERAGTDSVEAPEEKEDAHSSGGCGEKPCTRRKKRCPYSKQQIIELEREFLFNIYINKDRRMQLSHLLRLTDRCVNNPLNQDSFFT.

A compositionally biased stretch (low complexity) spans 1–14 (MFSSSFSYPSKTSP). Disordered stretches follow at residues 1–21 (MFSS…PFLA) and 151–206 (ITPG…CTRR). The segment covering 167 to 179 (RSPDGESSEERAG) has biased composition (basic and acidic residues). Positions 205–260 (RRKKRCPYSKQQIIELEREFLFNIYINKDRRMQLSHLLRLTDRCVNNPLNQDSFFT) form a DNA-binding region, homeobox; truncated.

The protein belongs to the Abd-B homeobox family.

It is found in the nucleus. Sequence-specific transcription factor which is part of a developmental regulatory system that provides cells with specific positional identities on the anterior-posterior axis. This Takifugu rubripes (Japanese pufferfish) protein is Homeobox protein Hox-D11b (hoxd11b).